The following is a 464-amino-acid chain: MLEKNKGKIIQILGPVVDVRFTTGKLPKLLNALRVELPTKEVFTFEVAQHIGDDTVRCISMVSTNGLRRGLTVEDTGKAIMVPVGKQVLGRMFDVLGNPIDELPLEEGGEKSSIHGPIPTYEQQKTTSEILETGIKVIDLLIPYAKGGKIGLFGGAGVGKTVLVQELINNIATQHNGLSVFTGVGERTREGNDLYYEMKAAGVLDKTALVFGQMNEPPGARMRVALTGLTMAEYFRDKQNQDVLLFIDNIFRFTQAGSEVSALLGRIPSAVGYQPTLATEMGALQERITSTRSGSITSVQAVYVPADDLTDPAPATTFSHLDAKTVLDRNVAALGIYPAIDPLESSSRLLDPLVVGQEHYKVAQDVINILQRFKELQDIIAILGMGELSEEDKKIVARARKIRNFLSQPFTVAEKFSGIKGSYVKLSDTIRSFKEILNGNLDDYPEDIFRYAGSIDDVIARYKK.

Position 154–161 (154–161 (GGAGVGKT)) interacts with ATP.

It belongs to the ATPase alpha/beta chains family. As to quaternary structure, F-type ATPases have 2 components, CF(1) - the catalytic core - and CF(0) - the membrane proton channel. CF(1) has five subunits: alpha(3), beta(3), gamma(1), delta(1), epsilon(1). CF(0) has three main subunits: a(1), b(2) and c(9-12). The alpha and beta chains form an alternating ring which encloses part of the gamma chain. CF(1) is attached to CF(0) by a central stalk formed by the gamma and epsilon chains, while a peripheral stalk is formed by the delta and b chains.

Its subcellular location is the cell membrane. It catalyses the reaction ATP + H2O + 4 H(+)(in) = ADP + phosphate + 5 H(+)(out). Produces ATP from ADP in the presence of a proton gradient across the membrane. The catalytic sites are hosted primarily by the beta subunits. This chain is ATP synthase subunit beta, found in Mycoplasmopsis synoviae (strain 53) (Mycoplasma synoviae).